The following is a 357-amino-acid chain: Acyl-coenzyme A:6-aminopenicillanic-acid-acyltransferase 40 kDa form (357 aa).

Positions 121 and 310 each coordinate 6-aminopenicillanate.

The protein belongs to the peptidase C45 family. In terms of assembly, the active form of the enzyme results from processing of the 40-kDa monomeric precursor to a heterodimer containing subunits of 11 and 29 kDa. Post-translationally, the pre-AAT protein is synthesized as 40 kDa precursor which is then self-processed into an 11 kDa (protein A) and a 29 kDa (protein B). The B protein carries AAT activity.

The protein localises to the peroxisome matrix. It carries out the reaction isopenicillin N + phenylacetyl-CoA + H2O = penicillin G + L-2-aminoadipate + CoA + H(+). Its pathway is antibiotic biosynthesis; penicillin G biosynthesis; penicillin G from L-alpha-aminoadipate and L-cysteine and L-valine: step 3/3. Nonribosomal peptide synthetase; part of the gene cluster that mediates the biosynthesis of penicillin, the world's most important antibiotic. AatA catalyzes the exchange of the alpha-aminoadipyl side chain of isopenicillin N for phenylacetic acid to yield penicillin. This step occurs in the peroxisomal matrix and the penM and paaT transporters are involved in the isopenicillin N and phenylacetic acid import into the peroxisome, respectively. The penicillin biosynthesis occurs via 3 enzymatic steps, the first corresponding to the production of the tripeptide N-[(5S)-5-amino-5-carboxypentanoyl]-L-cysteinyl-D-valine (LLD-ACV or ACV) by the NRPS acvA. The tripeptide ACV is then cyclized to isopenicillin N (IPN) by the isopenicillin N synthase ipnA that forms the beta-lactam nucleus. Finally, the alpha-aminoadipyl side chain is exchanged for phenylacetic acid by the isopenicillin N acyltransferase penDE to yield penicillin in the peroxisomal matrix. This is Acyl-coenzyme A:6-aminopenicillanic-acid-acyltransferase 40 kDa form from Emericella nidulans (strain FGSC A4 / ATCC 38163 / CBS 112.46 / NRRL 194 / M139) (Aspergillus nidulans).